Consider the following 341-residue polypeptide: MSRLSPVNQARWARFRHNRRGYWSLWIFLVLFGLSLCSELIANDKPLLVRYDGSWYFPLLKNYSESDFGGPLASQADYQDPWLKQRLENNGWVLWAPIRFGATSINFATNKPFPSPPSRQNWLGTDANGGDVLARILYGTRISVLFGLMLTLCSSVMGVLAGALQGYYGGKVDLWGQRFIEVWSGMPTLFLIILLSSVVQPNFWWLLAITVLFGWMSLVGVVRAEFLRTRNFDYIRAAQALGVSDRSIILRHMLPNAMVATLTFLPFILCSSITTLTSLDFLGFGLPLGSPSLGELLLQGKNNLQAPWLGITAFLSVAILLSLLIFIGEAVRDAFDPNKAV.

Residues 1–21 (MSRLSPVNQARWARFRHNRRG) are Cytoplasmic-facing. The chain crosses the membrane as a helical span at residues 22–42 (YWSLWIFLVLFGLSLCSELIA). Topologically, residues 43–143 (NDKPLLVRYD…ARILYGTRIS (101 aa)) are periplasmic. An ABC transmembrane type-1 domain is found at 140-332 (TRISVLFGLM…LLIFIGEAVR (193 aa)). Residues 144–164 (VLFGLMLTLCSSVMGVLAGAL) form a helical membrane-spanning segment. The Cytoplasmic portion of the chain corresponds to 165–178 (QGYYGGKVDLWGQR). Residues 179-199 (FIEVWSGMPTLFLIILLSSVV) traverse the membrane as a helical segment. Topologically, residues 200 to 201 (QP) are periplasmic. Residues 202 to 222 (NFWWLLAITVLFGWMSLVGVV) traverse the membrane as a helical segment. The Cytoplasmic segment spans residues 223 to 252 (RAEFLRTRNFDYIRAAQALGVSDRSIILRH). Residues 253–273 (MLPNAMVATLTFLPFILCSSI) form a helical membrane-spanning segment. At 274–307 (TTLTSLDFLGFGLPLGSPSLGELLLQGKNNLQAP) the chain is on the periplasmic side. A helical transmembrane segment spans residues 308 to 328 (WLGITAFLSVAILLSLLIFIG). Residues 329-341 (EAVRDAFDPNKAV) are Cytoplasmic-facing.

It belongs to the binding-protein-dependent transport system permease family. OppBC subfamily.

It localises to the cell inner membrane. Functionally, probably part of a binding-protein-dependent transport system. Probably responsible for the translocation of the substrate across the membrane. The protein is Inner membrane ABC transporter permease protein YejE (yejE) of Escherichia coli (strain K12).